The chain runs to 230 residues: Ribosomal RNA small subunit methyltransferase I (230 aa).

The protein belongs to the methyltransferase superfamily. RsmI family.

Its subcellular location is the cytoplasm. It carries out the reaction cytidine(1402) in 16S rRNA + S-adenosyl-L-methionine = 2'-O-methylcytidine(1402) in 16S rRNA + S-adenosyl-L-homocysteine + H(+). In terms of biological role, catalyzes the 2'-O-methylation of the ribose of cytidine 1402 (C1402) in 16S rRNA. The chain is Ribosomal RNA small subunit methyltransferase I from Hydrogenobaculum sp. (strain Y04AAS1).